We begin with the raw amino-acid sequence, 64 residues long: Large ribosomal subunit protein bL35 (64 aa).

This sequence belongs to the bacterial ribosomal protein bL35 family.

In Vibrio parahaemolyticus serotype O3:K6 (strain RIMD 2210633), this protein is Large ribosomal subunit protein bL35.